The following is a 116-amino-acid chain: HTH-type transcriptional regulator AnsR (116 aa).

One can recognise an HTH cro/C1-type domain in the interval 6 to 60 (LTELRKKKNWSLQYTADLLGIAKSTYAGYESGYRRPSLEALAMLADLFDTTCDEL). Positions 17–36 (LQYTADLLGIAKSTYAGYES) form a DNA-binding region, H-T-H motif.

Transcriptional repressor for the ans operon coding for L-asparaginase and L-aspartase. NH4(+) may influence this repression. This chain is HTH-type transcriptional regulator AnsR (ansR), found in Bacillus subtilis (strain 168).